We begin with the raw amino-acid sequence, 199 residues long: Glycerol-3-phosphate acyltransferase (199 aa).

5 helical membrane passes run A5–V25, K51–A71, V79–Y99, V112–I132, and C153–I173.

This sequence belongs to the PlsY family. In terms of assembly, probably interacts with PlsX.

Its subcellular location is the cell inner membrane. The enzyme catalyses an acyl phosphate + sn-glycerol 3-phosphate = a 1-acyl-sn-glycero-3-phosphate + phosphate. It participates in lipid metabolism; phospholipid metabolism. Functionally, catalyzes the transfer of an acyl group from acyl-phosphate (acyl-PO(4)) to glycerol-3-phosphate (G3P) to form lysophosphatidic acid (LPA). This enzyme utilizes acyl-phosphate as fatty acyl donor, but not acyl-CoA or acyl-ACP. The protein is Glycerol-3-phosphate acyltransferase of Solidesulfovibrio magneticus (strain ATCC 700980 / DSM 13731 / RS-1) (Desulfovibrio magneticus).